We begin with the raw amino-acid sequence, 319 residues long: 4-hydroxy-3-methylbut-2-enyl diphosphate reductase (319 aa).

Cys-12 provides a ligand contact to [4Fe-4S] cluster. His-41 and His-74 together coordinate (2E)-4-hydroxy-3-methylbut-2-enyl diphosphate. Dimethylallyl diphosphate-binding residues include His-41 and His-74. Residues His-41 and His-74 each contribute to the isopentenyl diphosphate site. Cys-96 lines the [4Fe-4S] cluster pocket. Position 124 (His-124) interacts with (2E)-4-hydroxy-3-methylbut-2-enyl diphosphate. His-124 is a dimethylallyl diphosphate binding site. Residue His-124 participates in isopentenyl diphosphate binding. Residue Glu-126 is the Proton donor of the active site. (2E)-4-hydroxy-3-methylbut-2-enyl diphosphate is bound at residue Thr-167. Position 197 (Cys-197) interacts with [4Fe-4S] cluster. The (2E)-4-hydroxy-3-methylbut-2-enyl diphosphate site is built by Ser-225, Ser-226, Asn-227, and Ser-269. Dimethylallyl diphosphate-binding residues include Ser-225, Ser-226, Asn-227, and Ser-269. Ser-225, Ser-226, Asn-227, and Ser-269 together coordinate isopentenyl diphosphate.

The protein belongs to the IspH family. As to quaternary structure, homodimer. [4Fe-4S] cluster serves as cofactor.

It catalyses the reaction isopentenyl diphosphate + 2 oxidized [2Fe-2S]-[ferredoxin] + H2O = (2E)-4-hydroxy-3-methylbut-2-enyl diphosphate + 2 reduced [2Fe-2S]-[ferredoxin] + 2 H(+). The enzyme catalyses dimethylallyl diphosphate + 2 oxidized [2Fe-2S]-[ferredoxin] + H2O = (2E)-4-hydroxy-3-methylbut-2-enyl diphosphate + 2 reduced [2Fe-2S]-[ferredoxin] + 2 H(+). It functions in the pathway isoprenoid biosynthesis; dimethylallyl diphosphate biosynthesis; dimethylallyl diphosphate from (2E)-4-hydroxy-3-methylbutenyl diphosphate: step 1/1. It participates in isoprenoid biosynthesis; isopentenyl diphosphate biosynthesis via DXP pathway; isopentenyl diphosphate from 1-deoxy-D-xylulose 5-phosphate: step 6/6. In terms of biological role, catalyzes the conversion of 1-hydroxy-2-methyl-2-(E)-butenyl 4-diphosphate (HMBPP) into a mixture of isopentenyl diphosphate (IPP) and dimethylallyl diphosphate (DMAPP). Acts in the terminal step of the DOXP/MEP pathway for isoprenoid precursor biosynthesis. The sequence is that of 4-hydroxy-3-methylbut-2-enyl diphosphate reductase from Buchnera aphidicola subsp. Acyrthosiphon pisum (strain Tuc7).